The following is a 920-amino-acid chain: WD repeat-containing protein 47 (920 aa).

Residues 10 to 42 (KEVEIIKLILDFLNSKKLHISMLALEKESGVIN) form the LisH domain. In terms of domain architecture, CTLH spans 45–102 (FSDDMLFLRQLILDGQWDEVLQFIQPLECMEKFDKKRFRYIILKQKFLEALCVNNAMS). T285 carries the post-translational modification Phosphothreonine. S289, S292, S297, and S312 each carry phosphoserine. Positions 371 to 380 (YEESPERSDT) are enriched in basic and acidic residues. The tract at residues 371–422 (YEESPERSDTPVEAQQPVSSEAMCQGSGLEKEPANGAQNPVPAKQEKNELRD) is disordered. The residue at position 423 (S423) is a Phosphoserine. The segment at 501 to 594 (LNQQCSGSKN…RSKGEEDDKS (94 aa)) is disordered. Residues 506–523 (SGSKNNGSNNSSVTSFST) show a composition bias toward low complexity. Residues 538-552 (NIHTSTPRNPGSTNH) show a composition bias toward polar residues. T543 carries the post-translational modification Phosphothreonine. WD repeat units lie at residues 605-644 (EDTQ…DASA), 660-699 (HHKG…CNAT), 707-749 (MHDG…GQGL), 754-792 (GHTG…CVRV), 799-838 (GTGS…MVQS), 841-880 (PHSS…TKQL), and 887-919 (EHKD…WTYS).

In terms of assembly, interacts with MAP1S (via WD repeats). In terms of tissue distribution, enriched in the nervous system (at protein level).

The protein localises to the cytoplasm. The protein resides in the cytoskeleton. In Mus musculus (Mouse), this protein is WD repeat-containing protein 47 (Wdr47).